The chain runs to 152 residues: Ribosome maturation factor RimP (152 aa).

This sequence belongs to the RimP family.

Its subcellular location is the cytoplasm. Required for maturation of 30S ribosomal subunits. The protein is Ribosome maturation factor RimP of Porphyromonas gingivalis (strain ATCC 33277 / DSM 20709 / CIP 103683 / JCM 12257 / NCTC 11834 / 2561).